A 221-amino-acid chain; its full sequence is CDC5 pindle pole body anchor protein 1 (221 aa).

Residues 142-221 are disordered; sequence KNIERDNLKP…PTEDSVPHAE (80 aa). Residues Ser158, Ser170, and Ser175 each carry the phosphoserine modification. The short motif at 165–170 is the CDC5-binding element; it reads PLVTSS. A compositionally biased stretch (polar residues) spans 166 to 188; that stretch reads LVTSSPIHMSPLQSRQRPVSSLQ. The CLB3-docking motif lies at 189-195; that stretch reads PPKGPNF. The short motif at 200–202 is the CDC14-binding element; sequence PKL.

As to quaternary structure, interacts with CDC5 and CDC14. Post-translationally, phosphorylated by CLB3-CDK1 in metaphase which is required for correct localization at the nuclear envelop and the spindle pole body, and dephosphorylated by CDC14 in early anaphase.

The protein localises to the nucleus membrane. The protein resides in the cytoplasm. It localises to the cytoskeleton. It is found in the microtubule organizing center. Its subcellular location is the spindle pole body. Functionally, specialized component of the nuclear membrane that may be involved in the connection of the spindle pole body (SPB) to the nuclear envelope. Recruits CDC5 to spindle pole bodies in metaphase. This Saccharomyces cerevisiae (strain ATCC 204508 / S288c) (Baker's yeast) protein is CDC5 pindle pole body anchor protein 1.